A 745-amino-acid chain; its full sequence is 5-methyltetrahydropteroyltriglutamate--homocysteine methyltransferase (745 aa).

Residues 16–19 (REWK) and K110 each bind 5-methyltetrahydropteroyltri-L-glutamate. L-homocysteine is bound by residues 420 to 422 (IGS) and E473. L-methionine is bound by residues 420 to 422 (IGS) and E473. W550 contacts 5-methyltetrahydropteroyltri-L-glutamate. An L-homocysteine-binding site is contributed by D588. D588 provides a ligand contact to L-methionine. 5-methyltetrahydropteroyltri-L-glutamate is bound at residue E594. Residues H630, C632, and E654 each contribute to the Zn(2+) site. The active-site Proton donor is the H683. Residue C715 coordinates Zn(2+).

It belongs to the vitamin-B12 independent methionine synthase family. Requires Zn(2+) as cofactor.

It catalyses the reaction 5-methyltetrahydropteroyltri-L-glutamate + L-homocysteine = tetrahydropteroyltri-L-glutamate + L-methionine. The protein operates within amino-acid biosynthesis; L-methionine biosynthesis via de novo pathway; L-methionine from L-homocysteine (MetE route): step 1/1. In terms of biological role, catalyzes the transfer of a methyl group from 5-methyltetrahydrofolate to homocysteine resulting in methionine formation. The polypeptide is 5-methyltetrahydropteroyltriglutamate--homocysteine methyltransferase (Streptococcus agalactiae serotype III (strain NEM316)).